Consider the following 116-residue polypeptide: Large ribosomal subunit protein uL18 (116 aa).

It belongs to the universal ribosomal protein uL18 family. In terms of assembly, part of the 50S ribosomal subunit; part of the 5S rRNA/L5/L18/L25 subcomplex. Contacts the 5S and 23S rRNAs.

This is one of the proteins that bind and probably mediate the attachment of the 5S RNA into the large ribosomal subunit, where it forms part of the central protuberance. This Mycoplasma capricolum subsp. capricolum (strain California kid / ATCC 27343 / NCTC 10154) protein is Large ribosomal subunit protein uL18.